Consider the following 40-residue polypeptide: Serine proteinase-like BMK-CBP (40 aa).

In terms of domain architecture, Peptidase S1 spans 1-40 (IFGGTFAKNGEYPWMVVIDLPEFACGGVLISKKFVLTAAH). The active-site Charge relay system is His-40.

Belongs to the peptidase S1 family. As to expression, expressed by the venom gland.

Its subcellular location is the secreted. Binds in a dose-dependent manner to the breast cancer cell line MCF-7. The protein is Serine proteinase-like BMK-CBP of Olivierus martensii (Manchurian scorpion).